Here is a 489-residue protein sequence, read N- to C-terminus: UDP-N-acetylmuramoyl-L-alanyl-D-glutamate--2,6-diaminopimelate ligase (489 aa).

Ser-30 lines the UDP-N-acetyl-alpha-D-muramoyl-L-alanyl-D-glutamate pocket. 113–119 (GTNGKTS) contributes to the ATP binding site. UDP-N-acetyl-alpha-D-muramoyl-L-alanyl-D-glutamate-binding positions include 155–156 (TT), Ser-182, Gln-188, and Arg-190. Lys-222 is modified (N6-carboxylysine). Residues Arg-388, 412-415 (DNPR), Gly-463, and Glu-467 contribute to the meso-2,6-diaminopimelate site. Residues 412-415 (DNPR) carry the Meso-diaminopimelate recognition motif motif.

Belongs to the MurCDEF family. MurE subfamily. Mg(2+) is required as a cofactor. Carboxylation is probably crucial for Mg(2+) binding and, consequently, for the gamma-phosphate positioning of ATP.

The protein resides in the cytoplasm. The catalysed reaction is UDP-N-acetyl-alpha-D-muramoyl-L-alanyl-D-glutamate + meso-2,6-diaminopimelate + ATP = UDP-N-acetyl-alpha-D-muramoyl-L-alanyl-gamma-D-glutamyl-meso-2,6-diaminopimelate + ADP + phosphate + H(+). Its pathway is cell wall biogenesis; peptidoglycan biosynthesis. Functionally, catalyzes the addition of meso-diaminopimelic acid to the nucleotide precursor UDP-N-acetylmuramoyl-L-alanyl-D-glutamate (UMAG) in the biosynthesis of bacterial cell-wall peptidoglycan. In Coxiella burnetii (strain RSA 493 / Nine Mile phase I), this protein is UDP-N-acetylmuramoyl-L-alanyl-D-glutamate--2,6-diaminopimelate ligase.